The chain runs to 315 residues: Cysteine synthase (315 aa).

Hydrogen sulfide-binding residues include N8 and R35. Position 42 is an N6-(pyridoxal phosphate)lysine (K42). Residues N72 and 177–181 (GTGGT) each bind pyridoxal 5'-phosphate. Position 269 (L269) interacts with hydrogen sulfide. S273 provides a ligand contact to pyridoxal 5'-phosphate.

Belongs to the cysteine synthase/cystathionine beta-synthase family. Homodimer. Requires pyridoxal 5'-phosphate as cofactor.

The catalysed reaction is O-acetyl-L-serine + hydrogen sulfide = L-cysteine + acetate. Its pathway is amino-acid biosynthesis; L-cysteine biosynthesis; L-cysteine from L-serine: step 2/2. In Buchnera aphidicola subsp. Acyrthosiphon pisum (strain APS) (Acyrthosiphon pisum symbiotic bacterium), this protein is Cysteine synthase (cysK).